The sequence spans 165 residues: Destrin (165 aa).

Ala-2 bears the N-acetylalanine mark. The residue at position 3 (Ser-3) is a Phosphoserine. The 150-residue stretch at 4 to 153 (GVQVADEVCR…NRACIAEKLG (150 aa)) folds into the ADF-H domain. The residue at position 19 (Lys-19) is an N6-acetyllysine. The short motif at 30–34 (KKRKK) is the Nuclear localization signal element.

This sequence belongs to the actin-binding proteins ADF family. ISGylated.

Functionally, actin-depolymerizing protein. Severs actin filaments (F-actin) and binds to actin monomers (G-actin). Acts in a pH-independent manner. The polypeptide is Destrin (DSTN) (Bos taurus (Bovine)).